The following is a 299-amino-acid chain: Formin-like protein 12 (299 aa).

Residues 1 to 295 enclose the FH2 domain; that stretch reads MASNCEKMLS…LEKRKMNIKQ (295 aa).

The protein belongs to the formin-like family. Class-II subfamily.

This Arabidopsis thaliana (Mouse-ear cress) protein is Formin-like protein 12 (FH12).